Here is a 250-residue protein sequence, read N- to C-terminus: UPF0736 protein BPUM_1067 (250 aa).

This sequence belongs to the UPF0736 family.

This is UPF0736 protein BPUM_1067 from Bacillus pumilus (strain SAFR-032).